The chain runs to 511 residues: GMP synthase [glutamine-hydrolyzing] (511 aa).

Residues 3–198 (SVLVLDFGSQ…LLNIAAITPD (196 aa)) form the Glutamine amidotransferase type-1 domain. The active-site Nucleophile is Cys80. Residues His172 and Glu174 contribute to the active site. One can recognise a GMPS ATP-PPase domain in the interval 199 to 386 (WSSKSFIEHQ…LGIPEDILMR (188 aa)). 226-232 (SGGVDST) contacts ATP.

As to quaternary structure, homodimer.

It carries out the reaction XMP + L-glutamine + ATP + H2O = GMP + L-glutamate + AMP + diphosphate + 2 H(+). It participates in purine metabolism; GMP biosynthesis; GMP from XMP (L-Gln route): step 1/1. In terms of biological role, catalyzes the synthesis of GMP from XMP. The chain is GMP synthase [glutamine-hydrolyzing] from Chlorobium chlorochromatii (strain CaD3).